Consider the following 393-residue polypeptide: NAD(P)H-quinone oxidoreductase subunit H, chloroplastic (393 aa).

Belongs to the complex I 49 kDa subunit family. As to quaternary structure, NDH is composed of at least 16 different subunits, 5 of which are encoded in the nucleus.

The protein resides in the plastid. It is found in the chloroplast thylakoid membrane. It catalyses the reaction a plastoquinone + NADH + (n+1) H(+)(in) = a plastoquinol + NAD(+) + n H(+)(out). The enzyme catalyses a plastoquinone + NADPH + (n+1) H(+)(in) = a plastoquinol + NADP(+) + n H(+)(out). NDH shuttles electrons from NAD(P)H:plastoquinone, via FMN and iron-sulfur (Fe-S) centers, to quinones in the photosynthetic chain and possibly in a chloroplast respiratory chain. The immediate electron acceptor for the enzyme in this species is believed to be plastoquinone. Couples the redox reaction to proton translocation, and thus conserves the redox energy in a proton gradient. The polypeptide is NAD(P)H-quinone oxidoreductase subunit H, chloroplastic (Pelargonium hortorum (Common geranium)).